The chain runs to 105 residues: UPF0235 protein RF_1332 (105 aa).

It belongs to the UPF0235 family.

This is UPF0235 protein RF_1332 from Rickettsia felis (strain ATCC VR-1525 / URRWXCal2) (Rickettsia azadi).